The following is a 441-amino-acid chain: Inner kinetochore subunit mis17 (441 aa).

Polar residues predominate over residues 160–173 (SSILENSPPNKVQR). The disordered stretch occupies residues 160 to 240 (SSILENSPPN…TSSMAPRNLL (81 aa)). Low complexity predominate over residues 174–183 (LSSLDSSQDS). The segment covering 192 to 201 (VTGTTFSSQA) has biased composition (polar residues). A compositionally biased stretch (low complexity) spans 217 to 233 (SLTNQSSSLQSSLQTSS).

Belongs to the CENP-U/AME1 family. In terms of assembly, component of the heterotetrameric kinetochore subcomplex COMA, which consists of fta2, fta7, mal2 and mis17. The COMA subcomplex is part of a larger constitutive centromere-associated network (CCAN) (also known as central kinetochore Sim4 complex in fission yeast), which is composed of at least cnl2, cnp3, cnp20, fta1, fta2, fta3, fta4, fta6, fta7, mal2, mhf1, mhf2, mis6, mis15, mis17, sim4 and wip1. Interacts with mis6 and mis15.

It is found in the nucleus. Its subcellular location is the chromosome. The protein localises to the centromere. It localises to the kinetochore. Its function is as follows. Component of the kinetochore, a multiprotein complex that assembles on centromeric DNA and attaches chromosomes to spindle microtubules, mediating chromosome segregation and sister chromatid segregation during meiosis and mitosis. Component of the inner kinetochore COMA complex, which connects centromere-associated proteins and the outer kinetochore. COMA interacts with other inner kinetochore proteins to form the inner kinetochore constitutive centromere-associated network (CCAN), which serves as a structural platform for outer kinetochore assembly. This is Inner kinetochore subunit mis17 (mis17) from Schizosaccharomyces pombe (strain 972 / ATCC 24843) (Fission yeast).